Consider the following 146-residue polypeptide: Hemoglobin subunit beta (146 aa).

An N-acetylvaline modification is found at Val-1. The Globin domain maps to 2–146 (HLTDGEKNAL…VANALAHKYH (145 aa)). At Ser-44 the chain carries Phosphoserine. Residue Lys-59 is modified to N6-acetyllysine. His-63 provides a ligand contact to heme b. Lys-82 is modified (N6-acetyllysine). His-92 serves as a coordination point for heme b. Cys-93 is modified (S-nitrosocysteine). Lys-144 carries the post-translational modification N6-acetyllysine.

It belongs to the globin family. Heterotetramer of two alpha chains and two beta chains. Red blood cells.

In terms of biological role, involved in oxygen transport from the lung to the various peripheral tissues. The polypeptide is Hemoglobin subunit beta (Otospermophilus beecheyi (California ground squirrel)).